Consider the following 315-residue polypeptide: Methylglutaconyl-CoA hydratase, mitochondrial (315 aa).

The transit peptide at 1-43 (MAAAAAPGALGALSAGRVRLVAACCARLGSAAWARGTAPRRGY) directs the protein to the mitochondrion. N6-acetyllysine; alternate is present on lysine 76. Lysine 76 carries the N6-succinyllysine; alternate modification. Residues 81–95 (KNLLKMLSKAVDALK) are RNA-binding. At lysine 85 the chain carries N6-succinyllysine. N6-acetyllysine; alternate is present on residues lysine 89 and lysine 120. Residues lysine 89 and lysine 120 each carry the N6-succinyllysine; alternate modification. Lysine 124 and lysine 136 each carry N6-succinyllysine. Residues lysine 180 and lysine 187 each carry the N6-acetyllysine; alternate modification. N6-succinyllysine; alternate is present on residues lysine 180 and lysine 187. Position 305 is an N6-succinyllysine (lysine 305).

Belongs to the enoyl-CoA hydratase/isomerase family. Homohexamer.

The protein resides in the mitochondrion. It carries out the reaction (3S)-3-hydroxy-3-methylglutaryl-CoA = 3-methyl-(2E)-glutaconyl-CoA + H2O. The enzyme catalyses (3S)-citramalyl-CoA = itaconyl-CoA + H2O. It catalyses the reaction 3-hydroxyisovaleryl-CoA = 3-methylbut-2-enoyl-CoA + H2O. The catalysed reaction is (S)-3-hydroxyglutaryl-CoA = (2E)-glutaconyl-CoA + H2O. The protein operates within amino-acid degradation; L-leucine degradation; (S)-3-hydroxy-3-methylglutaryl-CoA from 3-isovaleryl-CoA: step 3/3. Functionally, catalyzes the fifth step in the leucine degradation pathway, the reversible hydration of 3-methylglutaconyl-CoA (3-MG-CoA) to 3-hydroxy-3-methylglutaryl-CoA (HMG-CoA). Can catalyze the reverse reaction but at a much lower rate in vitro. HMG-CoA is then quickly degraded by another enzyme (such as HMG-CoA lyase) to give acetyl-CoA and acetoacetate. Uses other substrates such as (2E)-glutaconyl-CoA efficiently in vitro, and to a lesser extent 3-methylcrotonyl-CoA (3-methyl-(2E)-butenoyl-CoA), crotonyl-CoA ((2E)-butenoyl-CoA) and 3-hydroxybutanoyl-CoA (the missing carboxylate reduces affinity to the active site). Originally it was identified as an RNA-binding protein as it binds to AU-rich elements (AREs) in vitro. AREs direct rapid RNA degradation and mRNA deadenylation. Might have itaconyl-CoA hydratase activity, converting itaconyl-CoA into citramalyl-CoA in the C5-dicarboxylate catabolism pathway. The C5-dicarboxylate catabolism pathway is required to detoxify itaconate, an antimicrobial metabolite and immunomodulator produced by macrophages during certain infections, that can act as a vitamin B12-poisoning metabolite. The chain is Methylglutaconyl-CoA hydratase, mitochondrial from Rattus norvegicus (Rat).